A 385-amino-acid chain; its full sequence is Galactokinase (385 aa).

34 to 37 is a binding site for substrate; the sequence is EHTD. 124 to 130 is an ATP binding site; that stretch reads SSGLSSS. Mg(2+) is bound by residues Ser130 and Glu162. Residue Asp174 is the Proton acceptor of the active site. Tyr223 provides a ligand contact to substrate.

It belongs to the GHMP kinase family. GalK subfamily.

The protein localises to the cytoplasm. It carries out the reaction alpha-D-galactose + ATP = alpha-D-galactose 1-phosphate + ADP + H(+). It participates in carbohydrate metabolism; galactose metabolism. Catalyzes the transfer of the gamma-phosphate of ATP to D-galactose to form alpha-D-galactose-1-phosphate (Gal-1-P). The sequence is that of Galactokinase from Actinobacillus succinogenes (strain ATCC 55618 / DSM 22257 / CCUG 43843 / 130Z).